A 41-amino-acid chain; its full sequence is Competence-stimulating peptide type 2 (41 aa).

Positions 1–24 (MKNTVKLEQFVALKEKDLQKIKGG) are excised as a propeptide.

It belongs to the ComC family.

Its subcellular location is the secreted. Acts as a pheromone, induces cells to develop competence for genetic transformation. The sequence is that of Competence-stimulating peptide type 2 (comC2) from Streptococcus pneumoniae serotype 4 (strain ATCC BAA-334 / TIGR4).